The chain runs to 347 residues: UDP-N-acetylenolpyruvoylglucosamine reductase (347 aa).

In terms of domain architecture, FAD-binding PCMH-type spans 16–187; sequence AIEQCSHYLV…IAVGLKLPKT (172 aa). Arg163 is an active-site residue. Ser233 serves as the catalytic Proton donor. Glu328 is a catalytic residue.

The protein belongs to the MurB family. FAD is required as a cofactor.

The protein resides in the cytoplasm. It catalyses the reaction UDP-N-acetyl-alpha-D-muramate + NADP(+) = UDP-N-acetyl-3-O-(1-carboxyvinyl)-alpha-D-glucosamine + NADPH + H(+). The protein operates within cell wall biogenesis; peptidoglycan biosynthesis. Its function is as follows. Cell wall formation. This chain is UDP-N-acetylenolpyruvoylglucosamine reductase, found in Vibrio vulnificus (strain YJ016).